Consider the following 188-residue polypeptide: Protein GrpE (188 aa).

Residues 1–22 (MEENKQNQNLNTEETTEQQTEA) are compositionally biased toward low complexity. Positions 1 to 26 (MEENKQNQNLNTEETTEQQTEAETVE) are disordered.

This sequence belongs to the GrpE family. Homodimer.

It localises to the cytoplasm. In terms of biological role, participates actively in the response to hyperosmotic and heat shock by preventing the aggregation of stress-denatured proteins, in association with DnaK and GrpE. It is the nucleotide exchange factor for DnaK and may function as a thermosensor. Unfolded proteins bind initially to DnaJ; upon interaction with the DnaJ-bound protein, DnaK hydrolyzes its bound ATP, resulting in the formation of a stable complex. GrpE releases ADP from DnaK; ATP binding to DnaK triggers the release of the substrate protein, thus completing the reaction cycle. Several rounds of ATP-dependent interactions between DnaJ, DnaK and GrpE are required for fully efficient folding. The polypeptide is Protein GrpE (Exiguobacterium sibiricum (strain DSM 17290 / CCUG 55495 / CIP 109462 / JCM 13490 / 255-15)).